The primary structure comprises 86 residues: Small ribosomal subunit protein uS17 (86 aa).

It belongs to the universal ribosomal protein uS17 family. As to quaternary structure, part of the 30S ribosomal subunit.

Its function is as follows. One of the primary rRNA binding proteins, it binds specifically to the 5'-end of 16S ribosomal RNA. This chain is Small ribosomal subunit protein uS17, found in Marinomonas sp. (strain MWYL1).